The chain runs to 457 residues: Siroheme synthase (457 aa).

The segment at 1–204 is precorrin-2 dehydrogenase /sirohydrochlorin ferrochelatase; the sequence is MDHLPIFCQL…NDQKAITETT (204 aa). NAD(+) contacts are provided by residues 22-23 and 43-44; these read DV and LA. Ser128 carries the phosphoserine modification. Residues 216-457 form a uroporphyrinogen-III C-methyltransferase region; sequence GEVVLVGAGP…RDKLNWFSNH (242 aa). Pro225 contributes to the S-adenosyl-L-methionine binding site. The active-site Proton acceptor is Asp248. Lys270 (proton donor) is an active-site residue. Residues 301–303, Ile306, 331–332, Met382, and Gly411 each bind S-adenosyl-L-methionine; these read GGD and TA.

In the N-terminal section; belongs to the precorrin-2 dehydrogenase / sirohydrochlorin ferrochelatase family. This sequence in the C-terminal section; belongs to the precorrin methyltransferase family.

It catalyses the reaction uroporphyrinogen III + 2 S-adenosyl-L-methionine = precorrin-2 + 2 S-adenosyl-L-homocysteine + H(+). It carries out the reaction precorrin-2 + NAD(+) = sirohydrochlorin + NADH + 2 H(+). The enzyme catalyses siroheme + 2 H(+) = sirohydrochlorin + Fe(2+). It functions in the pathway cofactor biosynthesis; adenosylcobalamin biosynthesis; precorrin-2 from uroporphyrinogen III: step 1/1. Its pathway is cofactor biosynthesis; adenosylcobalamin biosynthesis; sirohydrochlorin from precorrin-2: step 1/1. It participates in porphyrin-containing compound metabolism; siroheme biosynthesis; precorrin-2 from uroporphyrinogen III: step 1/1. The protein operates within porphyrin-containing compound metabolism; siroheme biosynthesis; siroheme from sirohydrochlorin: step 1/1. It functions in the pathway porphyrin-containing compound metabolism; siroheme biosynthesis; sirohydrochlorin from precorrin-2: step 1/1. In terms of biological role, multifunctional enzyme that catalyzes the SAM-dependent methylations of uroporphyrinogen III at position C-2 and C-7 to form precorrin-2 via precorrin-1. Then it catalyzes the NAD-dependent ring dehydrogenation of precorrin-2 to yield sirohydrochlorin. Finally, it catalyzes the ferrochelation of sirohydrochlorin to yield siroheme. This Escherichia coli O157:H7 (strain EC4115 / EHEC) protein is Siroheme synthase.